A 593-amino-acid polypeptide reads, in one-letter code: MLO-like protein 8 (593 aa).

At Met-1–Thr-46 the chain is on the extracellular side. Residues Trp-47–Leu-67 traverse the membrane as a helical segment. Over His-68–Glu-92 the chain is Cytoplasmic. A helical membrane pass occupies residues Leu-93 to Ile-113. At Cys-114–His-181 the chain is on the extracellular side. The chain crosses the membrane as a helical span at residues Ile-182 to Gly-202. The Cytoplasmic segment spans residues Arg-203–Lys-304. The chain crosses the membrane as a helical span at residues Val-305–Ile-325. Residue Asp-326 is a topological domain, extracellular. Residues Gly-327–Thr-347 traverse the membrane as a helical segment. The Cytoplasmic segment spans residues Lys-348–His-393. Residues Phe-394–Gly-414 form a helical membrane-spanning segment. The Extracellular segment spans residues Ser-415–Val-430. Residues Ala-431 to Val-451 form a helical membrane-spanning segment. The Cytoplasmic segment spans residues Thr-452 to Arg-593. The tract at residues Glu-465–Ala-486 is calmodulin-binding. The tract at residues Lys-481–Arg-593 is disordered. Positions Lys-489–Ser-512 are enriched in low complexity. Acidic residues predominate over residues Leu-528–Asn-539. Over residues Thr-567–Ser-579 the composition is skewed to basic and acidic residues.

Belongs to the MLO family.

The protein localises to the membrane. Functionally, may be involved in modulation of pathogen defense and leaf cell death. Activity seems to be regulated by Ca(2+)-dependent calmodulin binding and seems not to require heterotrimeric G proteins. The polypeptide is MLO-like protein 8 (MLO8) (Arabidopsis thaliana (Mouse-ear cress)).